We begin with the raw amino-acid sequence, 205 residues long: Protease (205 aa).

Residues H55, D72, and C122 contribute to the active site.

It belongs to the peptidase C5 family. In terms of assembly, interacts with protease cofactor pVI-C; this interaction is necessary for protease activation.

It localises to the virion. The protein resides in the host nucleus. The enzyme catalyses Cleaves proteins of the adenovirus and its host cell at two consensus sites: -Yaa-Xaa-Gly-Gly-|-Xaa- and -Yaa-Xaa-Gly-Xaa-|-Gly- (in which Yaa is Met, Ile or Leu, and Xaa is any amino acid).. Requires DNA and protease cofactor for maximal activation. Inside nascent virions, becomes partially activated by binding to the viral DNA, allowing it to cleave the cofactor that binds to the protease and fully activates it. Actin, like the viral protease cofactor, seems to act as a cofactor in the cleavage of cytokeratin 18 and of actin itself. In terms of biological role, cleaves viral precursor proteins (pTP, pIIIa, pVI, pVII, pVIII, and pX) inside newly assembled particles giving rise to mature virions. Protease complexed to its cofactor slides along the viral DNA to specifically locate and cleave the viral precursors. Mature virions have a weakened organization compared to the unmature virions, thereby facilitating subsequent uncoating. Without maturation, the particle lacks infectivity and is unable to uncoat. Late in adenovirus infection, in the cytoplasm, may participate in the cytoskeleton destruction. Cleaves host cell cytoskeletal keratins K7 and K18. The sequence is that of Protease from Galliformes (FAdV-8).